A 458-amino-acid polypeptide reads, in one-letter code: MTFRKSFDCYDFYDRAKVGEKCTQDDWDLMKIPMKAMELKQKYGLDFKGEFVPTDKDMMEKLFQAGFEMLLECGIYCTDTHRIVKYTEDEIWDAINNVQKEFTLGTGRDAVNVRKRSVGDKRKPIVQGGPTGSPISEEVFMPVHMSYALEREVDTIVDGVMTSVRGKAPIPGSPYEVLAAKTETRLIKQACAMAGRPGMGIOGPETSLSAQGNISSDCMGGQISSDSHEVSQLNELKIDLDAIAVIAHYKGNSDIIMDEQMPIFGGYAGGIEETTIVDIATHINAFVMSSASWHLDGPVHIRWGSTNTRETLTIAGWACATISEFTDMLSGNQYYPCAGPCTEMCLLEASAQSITDTASGREILSGVASAKGVVTDKTTGMEARMMGEVARATAGMEISEVNKVLNALVPLYEKNYATAPAGKTFQECYDVKTITPTEEYMQVYDGARKKLEDLGLVF.

Position 202 (Pyl-202) is a non-standard amino acid, pyrrolysine.

The protein belongs to the monomethylamine methyltransferase family. As to quaternary structure, can form a complex with MtmC.

The enzyme catalyses Co(I)-[methylamine-specific corrinoid protein] + methylamine + H(+) = methyl-Co(III)-[methylamine-specific corrinoid protein] + NH4(+). The protein operates within one-carbon metabolism; methanogenesis from methylamine. Catalyzes the transfer of the methyl group from monomethylamine to the corrinoid cofactor of MtmC. This is Monomethylamine methyltransferase MtmB (mtmB1) from Methanosarcina mazei (strain ATCC BAA-159 / DSM 3647 / Goe1 / Go1 / JCM 11833 / OCM 88) (Methanosarcina frisia).